A 179-amino-acid chain; its full sequence is Large ribosomal subunit protein uL10 (179 aa).

The protein belongs to the universal ribosomal protein uL10 family. In terms of assembly, part of the ribosomal stalk of the 50S ribosomal subunit. The N-terminus interacts with L11 and the large rRNA to form the base of the stalk. The C-terminus forms an elongated spine to which L12 dimers bind in a sequential fashion forming a multimeric L10(L12)X complex.

Forms part of the ribosomal stalk, playing a central role in the interaction of the ribosome with GTP-bound translation factors. The polypeptide is Large ribosomal subunit protein uL10 (Kosmotoga olearia (strain ATCC BAA-1733 / DSM 21960 / TBF 19.5.1)).